We begin with the raw amino-acid sequence, 264 residues long: tRNA-uridine aminocarboxypropyltransferase A (264 aa).

Zn(2+) contacts are provided by Cys-25, Cys-28, Cys-35, and Cys-37. A DXTW motif is present at residues 144-147; sequence DATW. Residues 245-264 form a disordered region; the sequence is RPKLLKKRFQNQQPLEQEEE. Over residues 254–264 the composition is skewed to polar residues; that stretch reads QNQQPLEQEEE.

It belongs to the TDD superfamily. DTWD2 family.

It catalyses the reaction a uridine in tRNA + S-adenosyl-L-methionine = a 3-[(3S)-3-amino-3-carboxypropyl]uridine in tRNA + S-methyl-5'-thioadenosine + H(+). Functionally, catalyzes the formation of 3-(3-amino-3-carboxypropyl)uridine (acp3U) at position 20a in the D-loop of several cytoplasmic tRNAs (acp3U(20a)). The chain is tRNA-uridine aminocarboxypropyltransferase A from Arabidopsis thaliana (Mouse-ear cress).